Consider the following 248-residue polypeptide: Tyrosine recombinase XerD-like (248 aa).

The region spanning 1-72 (MIAFIEPFLA…TVNQFLYYLY (72 aa)) is the Core-binding (CB) domain. Residues 92–248 (SLKPQLTRLD…PITLEKYYKM (157 aa)) enclose the Tyr recombinase domain. Residue arginine 213 is part of the active site. Tyrosine 245 (O-(3'-phospho-DNA)-tyrosine intermediate) is an active-site residue.

This sequence belongs to the 'phage' integrase family. XerD-like subfamily.

Its subcellular location is the cytoplasm. In terms of biological role, putative tyrosine recombinase. Not involved in the cutting and rejoining of the recombining DNA molecules on dif(SL) site. The sequence is that of Tyrosine recombinase XerD-like from Streptococcus equi subsp. zooepidemicus (strain MGCS10565).